A 443-amino-acid chain; its full sequence is Glutamate-1-semialdehyde 2,1-aminomutase (443 aa).

Lys-272 carries the post-translational modification N6-(pyridoxal phosphate)lysine.

The protein belongs to the class-III pyridoxal-phosphate-dependent aminotransferase family. HemL subfamily. Homodimer. Requires pyridoxal 5'-phosphate as cofactor.

It is found in the cytoplasm. It catalyses the reaction (S)-4-amino-5-oxopentanoate = 5-aminolevulinate. Its pathway is porphyrin-containing compound metabolism; protoporphyrin-IX biosynthesis; 5-aminolevulinate from L-glutamyl-tRNA(Glu): step 2/2. It participates in porphyrin-containing compound metabolism; chlorophyll biosynthesis. The protein is Glutamate-1-semialdehyde 2,1-aminomutase of Chloroflexus aurantiacus (strain ATCC 29366 / DSM 635 / J-10-fl).